A 442-amino-acid chain; its full sequence is Glutamate--tRNA ligase 1 (442 aa).

The 'HIGH' region motif lies at 9–19; the sequence is PSPTGKLHVGN. The 'KMSKS' region motif lies at 240–244; that stretch reads KLSKR. K243 is a binding site for ATP.

Belongs to the class-I aminoacyl-tRNA synthetase family. Glutamate--tRNA ligase type 1 subfamily. In terms of assembly, monomer.

Its subcellular location is the cytoplasm. It catalyses the reaction tRNA(Glu) + L-glutamate + ATP = L-glutamyl-tRNA(Glu) + AMP + diphosphate. In terms of biological role, catalyzes the attachment of glutamate to tRNA(Glu) in a two-step reaction: glutamate is first activated by ATP to form Glu-AMP and then transferred to the acceptor end of tRNA(Glu). In Novosphingobium aromaticivorans (strain ATCC 700278 / DSM 12444 / CCUG 56034 / CIP 105152 / NBRC 16084 / F199), this protein is Glutamate--tRNA ligase 1.